Reading from the N-terminus, the 1037-residue chain is MVDALNLGRRLRVRSTAYVASELVPFFWPMRNFISRNPLRRLESMPFEQAVRRGAALFHARMFLPRGDYQRWRREGKVRPETLDEEIGRRSQDLPPVPGVDWPRWLHALMQTPHDRDAVVRGVRAKDVHAALRGHPPSAQAVDVAALLPELEQRLHARTLPEAVDALWGTGLADELDDLVIKSYLDFFDEDQSAWRMPGRERGLFSAWSEVTRRNARMVLRRLHVRHILDHVQDAESAVVYVMEEMGIGAEAWPTYFTRVLTRLHGWTGFVRWRASAKHYYWAQQYPADIVDLLAIRLVMGLALLQESARHRGTPMRRDDLGAVVRERGAECVLRYALHSGEVLPDWAQRIDDTLSRGNGARCHDLLQRYWPLWQARLGQQQAAALRELAAAANATAALDALAPEDVEGLLQGLRDFAPQEGMVWTLAMEGQAIDKLLTQVQAPQDPPPDKRPFAQALFCIDVRAEPIRRHLERVGNYQTFGIAGFFGVPVGFLGYGKGSESHYCPAVITPKNLVLELPAALDPHNEDFVSTLGHVLHDLKKSVLSPYVTVEAVGMLFGLDLFGKTLAPLGYSRWRRRIDTEKPVTRLLVDKLSREQADSIIRTLQRAMIVKALHTELKIERERVDSGIIRELREIALRRRDGPTRLRTTFGVPQTQETEFIDKLRQVYGVDADYTNHQLERLGRIGYSLDEQVNYVHTALTMIGLTQTFSRFVLVVGHGGKTENNPYESALDCGACGGASGIVNARVFAQMANKAAVRERLAAMGITIPEDTWFMPALHVTTTDAIELFDLDLLPPRHLVYLERLRNSLRAASRLTAAERMPKLLPEAKALEPAEALRLANRLAVDWAQVRPEWGLSGNVYGIVGRRALTENSDLQGSAFLLSYDWRCDPRGRLLENLLTGPVVVGQWINLEYFFSTVDNSRLGSGSKVYHNVSGRFGVMTGSLSDLRTGLPMQTVMREGRPYHEPMRLIALIEAPLDFAGRVLERVVKVKSLVLGGWIRAIVIDPTQGYKPFVFNNGQWEERTPLIAPAEKEYSA.

Zn(2+)-binding residues include cysteine 460, aspartate 462, histidine 719, and cysteine 734.

The protein belongs to the inorganic carbon transporter (TC 9.A.2) DabA family. Forms a complex with DabB. Zn(2+) serves as cofactor.

It is found in the cell inner membrane. Its function is as follows. Part of an energy-coupled inorganic carbon pump. This chain is Probable inorganic carbon transporter subunit DabA 2, found in Nitrobacter winogradskyi (strain ATCC 25391 / DSM 10237 / CIP 104748 / NCIMB 11846 / Nb-255).